The sequence spans 244 residues: ATP synthase subunit a (244 aa).

7 consecutive transmembrane segments (helical) span residues 20–40 (FFDV…VIVI), 81–101 (GILF…LNVM), 113–133 (QLLV…IWGF), 140–160 (FLNI…LVFI), 176–196 (LFAN…AAIY), 202–222 (FIGI…LGIA), and 223–243 (FLQA…IINL).

The protein belongs to the ATPase A chain family. In terms of assembly, F-type ATPases have 2 components, CF(1) - the catalytic core - and CF(0) - the membrane proton channel. CF(1) has five subunits: alpha(3), beta(3), gamma(1), delta(1), epsilon(1). CF(0) has three main subunits: a, b and c.

Its subcellular location is the mitochondrion inner membrane. Mitochondrial membrane ATP synthase (F(1)F(0) ATP synthase or Complex V) produces ATP from ADP in the presence of a proton gradient across the membrane which is generated by electron transport complexes of the respiratory chain. F-type ATPases consist of two structural domains, F(1) - containing the extramembraneous catalytic core and F(0) - containing the membrane proton channel, linked together by a central stalk and a peripheral stalk. During catalysis, ATP synthesis in the catalytic domain of F(1) is coupled via a rotary mechanism of the central stalk subunits to proton translocation. Key component of the proton channel; it may play a direct role in the translocation of protons across the membrane. The polypeptide is ATP synthase subunit a (atp6) (Dictyostelium citrinum (Slime mold)).